A 530-amino-acid chain; its full sequence is uncharacterized protein (530 aa).

2 stretches are compositionally biased toward basic and acidic residues: residues 1–11 (MTALNDTERAV) and 28–38 (PRSEETASERP). The interval 1–38 (MTALNDTERAVRNWTAGRPHRPAPMRPPRSEETASERP) is disordered. Over 1–50 (MTALNDTERAVRNWTAGRPHRPAPMRPPRSEETASERPSRYYPTWLPSRS) the chain is Cytoplasmic. A helical membrane pass occupies residues 51–71 (FIAAVIAIGGMQLLATMDSTV). The Extracellular segment spans residues 72–91 (AIVALPKIQNELSLSDAGRS). The helical transmembrane segment at 92–112 (WVITAYVLTFGGLMLLGGRLG) threads the bilayer. At 113–119 (DTIGRKR) the chain is on the cytoplasmic side. A helical transmembrane segment spans residues 120-140 (TFIVGVALFTISSVLCAVAWD). Over 141 to 150 (EATLVIARLS) the chain is Extracellular. Residues 151–171 (QGVGSAIASPTGLALVATTFP) form a helical membrane-spanning segment. Over 172–180 (KGPARNAAT) the chain is Cytoplasmic. Residues 181 to 201 (AVFAAMTAIGSVMGLVVGGAL) form a helical membrane-spanning segment. The Extracellular portion of the chain corresponds to 202-203 (TE). Residues 204–224 (VSWRWAFLVNVPIGLVMIYLA) form a helical membrane-spanning segment. Residues 225–239 (RTALRETNKERMKLD) are Cytoplasmic-facing. The chain crosses the membrane as a helical span at residues 240 to 260 (ATGAILATLACTAAVFAFSIG). Topologically, residues 261–266 (PEKGWM) are extracellular. Residues 267-287 (SGITIGSGLVALAAAVAFVIV) traverse the membrane as a helical segment. Residues 288–306 (ERTAENPVVPFHLFRDRNR) are Cytoplasmic-facing. Residues 307 to 327 (LVTFSAILLAGGVMFSLTVCI) traverse the membrane as a helical segment. Residues 328 to 343 (GLYVQDILGYSALRAG) are Extracellular-facing. The chain crosses the membrane as a helical span at residues 344-364 (VGFIPFVIAMGIGLGVSSQLV). The Cytoplasmic portion of the chain corresponds to 365-370 (SRFSPR). The helical transmembrane segment at 371-391 (VLTIGGGYLLFGAMLYGSFFM) threads the bilayer. The Extracellular segment spans residues 392–400 (HRGVPYFPN). The chain crosses the membrane as a helical span at residues 401–421 (LVMPIVVGGIGIGMAVVPLTL). The Cytoplasmic portion of the chain corresponds to 422 to 437 (SAIAGVGFDQIGPVSA). Residues 438–458 (IALMLQSLGGPLVLAVIQAVI) form a helical membrane-spanning segment. Residues 459-488 (TSRTLYLGGTTGPVKFMNDVQLAALDHAYT) are Extracellular-facing. A helical membrane pass occupies residues 489 to 509 (YGLLWVAGAAIIVGGMALFIG). The Cytoplasmic segment spans residues 510-530 (YTPQQVAHAQEVKEAIDAGEL).

The protein belongs to the major facilitator superfamily.

The protein localises to the cell membrane. This is an uncharacterized protein from Mycobacterium tuberculosis (strain CDC 1551 / Oshkosh).